The chain runs to 307 residues: tRNA dimethylallyltransferase (307 aa).

6–13 (GATATGKT) contacts ATP. 8 to 13 (TATGKT) is a substrate binding site. Residues 31 to 34 (DSMM) form an interaction with substrate tRNA region.

Belongs to the IPP transferase family. Monomer. Requires Mg(2+) as cofactor.

The catalysed reaction is adenosine(37) in tRNA + dimethylallyl diphosphate = N(6)-dimethylallyladenosine(37) in tRNA + diphosphate. In terms of biological role, catalyzes the transfer of a dimethylallyl group onto the adenine at position 37 in tRNAs that read codons beginning with uridine, leading to the formation of N6-(dimethylallyl)adenosine (i(6)A). This Sulfurihydrogenibium sp. (strain YO3AOP1) protein is tRNA dimethylallyltransferase.